A 184-amino-acid polypeptide reads, in one-letter code: Protein FAM89A (184 aa).

Residues 148–184 (YFQEQNSLHDRRDRGPPRDLSLPVSSLSSSDWILESI) form a disordered region. The span at 154–164 (SLHDRRDRGPP) shows a compositional bias: basic and acidic residues. Residues 167–184 (LSLPVSSLSSSDWILESI) are compositionally biased toward low complexity.

It belongs to the FAM89 family.

The polypeptide is Protein FAM89A (FAM89A) (Homo sapiens (Human)).